The chain runs to 299 residues: Protoheme IX farnesyltransferase (299 aa).

9 consecutive transmembrane segments (helical) span residues 17-37 (VVAL…PAPY), 41-61 (GLLV…AAVF), 91-111 (ALMW…LFVN), 113-133 (ITMV…TLYL), 141-161 (IVIG…AVSG), 168-188 (ACLL…ALAI), 207-227 (GLAY…LVSL), 228-248 (LPYL…ALGI), and 266-286 (IAWC…VTLL).

Belongs to the UbiA prenyltransferase family. Protoheme IX farnesyltransferase subfamily.

Its subcellular location is the cell inner membrane. It catalyses the reaction heme b + (2E,6E)-farnesyl diphosphate + H2O = Fe(II)-heme o + diphosphate. It participates in porphyrin-containing compound metabolism; heme O biosynthesis; heme O from protoheme: step 1/1. Functionally, converts heme B (protoheme IX) to heme O by substitution of the vinyl group on carbon 2 of heme B porphyrin ring with a hydroxyethyl farnesyl side group. In Ruthia magnifica subsp. Calyptogena magnifica, this protein is Protoheme IX farnesyltransferase.